A 453-amino-acid chain; its full sequence is Bifunctional protein GlmU (453 aa).

Residues 1–225 form a pyrophosphorylase region; the sequence is MNIVILAAGT…GWETLGVNSK (225 aa). UDP-N-acetyl-alpha-D-glucosamine-binding positions include 6–9, Lys20, Gln71, 76–77, 98–100, Gly135, Glu150, Asn165, and Asn223; these read LAAG, GT, and YGD. Asp100 serves as a coordination point for Mg(2+). Asn223 lines the Mg(2+) pocket. Positions 226–246 are linker; it reads AQLAELERIHQRNLADALLAA. The N-acetyltransferase stretch occupies residues 247–453; sequence GVTLADPARI…GYVRPVKKKS (207 aa). Arg329 and Lys347 together coordinate UDP-N-acetyl-alpha-D-glucosamine. The active-site Proton acceptor is the His359. 2 residues coordinate UDP-N-acetyl-alpha-D-glucosamine: Tyr362 and Asn373. Acetyl-CoA contacts are provided by residues Ala376, 382-383, Ser401, and Ala419; that span reads NY.

This sequence in the N-terminal section; belongs to the N-acetylglucosamine-1-phosphate uridyltransferase family. In the C-terminal section; belongs to the transferase hexapeptide repeat family. As to quaternary structure, homotrimer. Mg(2+) serves as cofactor.

The protein localises to the cytoplasm. It carries out the reaction alpha-D-glucosamine 1-phosphate + acetyl-CoA = N-acetyl-alpha-D-glucosamine 1-phosphate + CoA + H(+). It catalyses the reaction N-acetyl-alpha-D-glucosamine 1-phosphate + UTP + H(+) = UDP-N-acetyl-alpha-D-glucosamine + diphosphate. It participates in nucleotide-sugar biosynthesis; UDP-N-acetyl-alpha-D-glucosamine biosynthesis; N-acetyl-alpha-D-glucosamine 1-phosphate from alpha-D-glucosamine 6-phosphate (route II): step 2/2. Its pathway is nucleotide-sugar biosynthesis; UDP-N-acetyl-alpha-D-glucosamine biosynthesis; UDP-N-acetyl-alpha-D-glucosamine from N-acetyl-alpha-D-glucosamine 1-phosphate: step 1/1. The protein operates within bacterial outer membrane biogenesis; LPS lipid A biosynthesis. Its function is as follows. Catalyzes the last two sequential reactions in the de novo biosynthetic pathway for UDP-N-acetylglucosamine (UDP-GlcNAc). The C-terminal domain catalyzes the transfer of acetyl group from acetyl coenzyme A to glucosamine-1-phosphate (GlcN-1-P) to produce N-acetylglucosamine-1-phosphate (GlcNAc-1-P), which is converted into UDP-GlcNAc by the transfer of uridine 5-monophosphate (from uridine 5-triphosphate), a reaction catalyzed by the N-terminal domain. The polypeptide is Bifunctional protein GlmU (Burkholderia pseudomallei (strain K96243)).